A 3564-amino-acid chain; its full sequence is CUB and sushi domain-containing protein 1 (3564 aa).

The first 26 residues, 1 to 26 (MTAWRRFQSLLLLLGLLVLCARLLTA), serve as a signal peptide directing secretion. Residues 27–3487 (AKGQNCGGLV…SHYHGTSSGS (3461 aa)) are Extracellular-facing. 10 disulfide bridges follow: Cys32/Cys58, Cys145/Cys185, Cys171/Cys202, Cys208/Cys234, Cys349/Cys389, Cys375/Cys406, Cys411/Cys437, Cys527/Cys567, Cys553/Cys580, and Cys584/Cys610. Residues 32-140 (CGGLVQGPNG…QGFKALYEVL (109 aa)) form the CUB 1 domain. N-linked (GlcNAc...) asparagine glycans are attached at residues Asn40 and Asn57. A Sushi 1 domain is found at 143 to 204 (HTCGNPGEIL…WDFPAPFCRA (62 aa)). Positions 208–312 (CGGTLRGTSS…KGFNAQFQVK (105 aa)) constitute a CUB 2 domain. One can recognise a Sushi 2 domain in the interval 347 to 408 (DMCPDPGIPE…WSDHRPICRA (62 aa)). A CUB 3 domain is found at 411–522 (CGSNLRGPSG…PGFKAVYQEI (112 aa)). The region spanning 525–582 (GGCGDPGIPAYGKRTGSSFLHGDTLTFECPAAFELVGERVITCQQNNQWSGNKPSCVF) is the Sushi 3 domain. A CUB 4 domain is found at 584–692 (CFFNFTASSG…RGFNITYTTF (109 aa)). 2 N-linked (GlcNAc...) asparagine glycosylation sites follow: Asn587 and Asn686. Positions 695–756 (NECHDPGIPI…WSSTVPRCEA (62 aa)) constitute a Sushi 4 domain. Intrachain disulfides connect Cys697/Cys738, Cys723/Cys754, Cys758/Cys784, Cys873/Cys913, Cys899/Cys926, and Cys930/Cys956. The CUB 5 domain maps to 758–866 (CGGHLTASSG…IGFLIHYESV (109 aa)). A Sushi 5 domain is found at 871–928 (DSCLDPGIPVNGHRHGGDFGIRSTVTFSCDPGYTLSDDEPLVCERNHQWNHALPSCDA). In terms of domain architecture, CUB 6 spans 930-1040 (CGGYIQGKSG…EGFNITFSEY (111 aa)). N-linked (GlcNAc...) asparagine glycans are attached at residues Asn955, Asn1015, and Asn1034. The region spanning 1043–1102 (EPCDDPGVPAFSRRIGFHFGVGDSLTFSCFLGYRLEGATKLTCLGGGRRVWSAPLPRCVA) is the Sushi 6 domain. Disulfide bonds link Cys1045–Cys1085, Cys1071–Cys1100, and Cys1104–Cys1130. Positions 1104–1212 (CGASVKGNEG…QGFQLTYTSF (109 aa)) constitute a CUB 7 domain. Asn1184 and Asn1197 each carry an N-linked (GlcNAc...) asparagine glycan. One can recognise a Sushi 7 domain in the interval 1215 to 1275 (VKCEDPGIPN…WDKPLPSCIA (61 aa)). 12 disulfides stabilise this stretch: Cys1217/Cys1258, Cys1244/Cys1273, Cys1277/Cys1304, Cys1391/Cys1431, Cys1417/Cys1447, Cys1451/Cys1477, Cys1564/Cys1604, Cys1590/Cys1621, Cys1625/Cys1651, Cys1741/Cys1781, Cys1767/Cys1798, and Cys1802/Cys1828. Residues 1277–1386 (CGGQIHAATS…SGFSIQFSTS (110 aa)) form the CUB 8 domain. Residues 1389-1449 (ATCNDPGMPQ…WQPDPPTCIA (61 aa)) enclose the Sushi 8 domain. Asn1399 is a glycosylation site (N-linked (GlcNAc...) asparagine). The CUB 9 domain maps to 1451-1559 (CGGNLTGPAG…SGFAIEFKEK (109 aa)). N-linked (GlcNAc...) asparagine glycosylation is found at Asn1454 and Asn1572. The region spanning 1562–1623 (EACFDPGNIM…WDQVLPSCNA (62 aa)) is the Sushi 9 domain. In terms of domain architecture, CUB 10 spans 1625-1733 (CGGQYTGSEG…RGFHFVYQAV (109 aa)). Asn1644 is a glycosylation site (N-linked (GlcNAc...) asparagine). A Sushi 10 domain is found at 1739 to 1800 (TQCSSVPEPR…WNDTIPSCVV (62 aa)). N-linked (GlcNAc...) asparagine glycans are attached at residues Asn1792, Asn1805, and Asn1882. Residues 1802–1910 (CSGNFTQRRG…AGFHLEYKTV (109 aa)) form the CUB 11 domain. One can recognise a Sushi 11 domain in the interval 1913-1972 (AACQEPALPSNSIKIGDRYMVNDVLSFQCEPGYTLQGRSHISCMPGTVRRWNYPSPLCIA). 3 cysteine pairs are disulfide-bonded: Cys1915/Cys1955, Cys1941/Cys1970, and Cys1974/Cys2000. The CUB 12 domain occupies 1974–2082 (CGGTLSTLGG…QGFKLAYQAY (109 aa)). Asn2018 is a glycosylation site (N-linked (GlcNAc...) asparagine). A Sushi 12 domain is found at 2085-2144 (QNCPDPPPFQNGYMINSDYSVGQSVSFECYPGYILIGHPVLTCQHGINRNWNYPFPRCDA). Cystine bridges form between Cys2087/Cys2127, Cys2113/Cys2142, and Cys2146/Cys2172. In terms of domain architecture, CUB 13 spans 2146–2257 (CGYNVTSQNG…LNFHAFQLKK (112 aa)). Residues Asn2149, Asn2154, and Asn2187 are each glycosylated (N-linked (GlcNAc...) asparagine). A Sushi 13 domain is found at 2256 to 2317 (KKCQPPPAVP…FEGSLPTCEA (62 aa)). Disulfide bonds link Cys2258–Cys2300, Cys2286–Cys2315, and Cys2319–Cys2347. The CUB 14 domain occupies 2319-2430 (CPANEVRTGS…KGFKIRYAAP (112 aa)). 6 N-linked (GlcNAc...) asparagine glycosylation sites follow: Asn2358, Asn2394, Asn2400, Asn2445, Asn2470, and Asn2503. Sushi domains are found at residues 2430 to 2492 (PYCS…LCQA), 2493 to 2554 (VSCG…TCKP), 2555 to 2619 (VACP…SCRV), 2620 to 2677 (ISCG…RCLA), 2678 to 2735 (GHCG…VCVP), 2736 to 2793 (ITCG…TCRV), 2794 to 2856 (VNCS…KCLA), 2857 to 2914 (ISCG…HCTG), 2918 to 2975 (GFCG…VCEA), 2976 to 3034 (VSCG…DCTI), 3035 to 3094 (ISCG…VCKA), 3095 to 3152 (VLCP…QCLP), 3153 to 3210 (VFCG…TCID), 3214 to 3272 (NTCP…ECIP), and 3273 to 3332 (HACR…VCKS). Intrachain disulfides connect Cys2432-Cys2473, Cys2459-Cys2490, Cys2495-Cys2537, Cys2521-Cys2552, Cys2557-Cys2602, Cys2588-Cys2617, Cys2622-Cys2662, Cys2648-Cys2675, Cys2680-Cys2720, Cys2706-Cys2733, Cys2738-Cys2778, and Cys2764-Cys2791. A glycan (N-linked (GlcNAc...) asparagine) is linked at Asn2605. N-linked (GlcNAc...) asparagine glycans are attached at residues Asn2750 and Asn2761. An N-linked (GlcNAc...) asparagine glycan is attached at Asn2795. Intrachain disulfides connect Cys2796–Cys2841, Cys2827–Cys2854, Cys2859–Cys2899, Cys2885–Cys2912, Cys2920–Cys2960, Cys2946–Cys2973, Cys2978–Cys3019, Cys3005–Cys3032, Cys3037–Cys3079, Cys3063–Cys3092, Cys3097–Cys3137, Cys3123–Cys3150, Cys3155–Cys3195, Cys3181–Cys3208, Cys3216–Cys3257, Cys3243–Cys3270, Cys3275–Cys3317, and Cys3302–Cys3330. N-linked (GlcNAc...) asparagine glycosylation is present at Asn2894. Asn2963 carries an N-linked (GlcNAc...) asparagine glycan. 2 N-linked (GlcNAc...) asparagine glycosylation sites follow: Asn3022 and Asn3056. An N-linked (GlcNAc...) asparagine glycan is attached at Asn3105. Residues Asn3228 and Asn3260 are each glycosylated (N-linked (GlcNAc...) asparagine). N-linked (GlcNAc...) asparagine glycans are attached at residues Asn3339, Asn3379, and Asn3386. Residues 3488–3508 (VAAAILVPFFALILSGFAFYL) form a helical membrane-spanning segment. Over 3509 to 3564 (YKHRTRPKVQYNGYAGHENSNGQASFENPMYDTNLKPTEAKAVRFDTTLNTVCTVV) the chain is Cytoplasmic.

It belongs to the CSMD family. Weakly expressed in most tissues, except in brain. Expressed at intermediate level in brain, including cerebellum, substantia nigra, hippocampus and fetal brain.

The protein resides in the membrane. Functionally, potential suppressor of squamous cell carcinomas. This Homo sapiens (Human) protein is CUB and sushi domain-containing protein 1 (CSMD1).